The primary structure comprises 561 residues: Oxygen-dependent choline dehydrogenase (561 aa).

6–35 (DYIIIGAGSAGNVLATRLTEDADVSVLLLE) is an FAD binding site. H475 (proton acceptor) is an active-site residue.

Belongs to the GMC oxidoreductase family. The cofactor is FAD.

The enzyme catalyses choline + A = betaine aldehyde + AH2. It catalyses the reaction betaine aldehyde + NAD(+) + H2O = glycine betaine + NADH + 2 H(+). The protein operates within amine and polyamine biosynthesis; betaine biosynthesis via choline pathway; betaine aldehyde from choline (cytochrome c reductase route): step 1/1. In terms of biological role, involved in the biosynthesis of the osmoprotectant glycine betaine. Catalyzes the oxidation of choline to betaine aldehyde and betaine aldehyde to glycine betaine at the same rate. This chain is Oxygen-dependent choline dehydrogenase, found in Pseudomonas aeruginosa (strain UCBPP-PA14).